Here is a 316-residue protein sequence, read N- to C-terminus: Ribosomal RNA small subunit methyltransferase A (316 aa).

S-adenosyl-L-methionine-binding residues include Asn-33, Val-35, Gly-60, Glu-81, Asp-110, and Asn-133.

This sequence belongs to the class I-like SAM-binding methyltransferase superfamily. rRNA adenine N(6)-methyltransferase family. RsmA subfamily.

Its subcellular location is the cytoplasm. The catalysed reaction is adenosine(1518)/adenosine(1519) in 16S rRNA + 4 S-adenosyl-L-methionine = N(6)-dimethyladenosine(1518)/N(6)-dimethyladenosine(1519) in 16S rRNA + 4 S-adenosyl-L-homocysteine + 4 H(+). Functionally, specifically dimethylates two adjacent adenosines (A1518 and A1519) in the loop of a conserved hairpin near the 3'-end of 16S rRNA in the 30S particle. May play a critical role in biogenesis of 30S subunits. The chain is Ribosomal RNA small subunit methyltransferase A from Corynebacterium jeikeium (strain K411).